Consider the following 244-residue polypeptide: tRNA pseudouridine synthase A (244 aa).

Asp55 acts as the Nucleophile in catalysis. Tyr113 contributes to the substrate binding site.

Belongs to the tRNA pseudouridine synthase TruA family. In terms of assembly, homodimer.

It catalyses the reaction uridine(38/39/40) in tRNA = pseudouridine(38/39/40) in tRNA. Functionally, formation of pseudouridine at positions 38, 39 and 40 in the anticodon stem and loop of transfer RNAs. The chain is tRNA pseudouridine synthase A from Phytoplasma mali (strain AT).